A 55-amino-acid polypeptide reads, in one-letter code: Spermatid nuclear transition protein 1 (55 aa).

A compositionally biased stretch (basic residues) spans Met-1–Lys-42. Residues Met-1 to Leu-55 form a disordered region. Residues Ser-9, Ser-36, Ser-37, and Ser-40 each carry the phosphoserine modification.

This sequence belongs to the nuclear transition protein 1 family. As to expression, testis.

It localises to the nucleus. The protein resides in the chromosome. Plays a key role in the replacement of histones to protamine in the elongating spermatids of mammals. In condensing spermatids, loaded onto the nucleosomes, where it promotes the recruitment and processing of protamines, which are responsible for histone eviction. The chain is Spermatid nuclear transition protein 1 (TNP1) from Ovis aries (Sheep).